A 22-amino-acid chain; its full sequence is IVGGYECEAYSKPYQVSINLGY.

One can recognise a Peptidase S1 domain in the interval I1–Y22.

It belongs to the peptidase S1 family. In terms of tissue distribution, detected in skeletal muscle (at protein level).

The protein localises to the cytoplasm. Serine protease which degrades the myosin heavy chain and tropomyosin, but not actin. Selectively cleaves Arg-|-Xaa bonds. The chain is Myofibril-bound serine protease from Saurida undosquamis (Brushtooth lizardfish).